A 938-amino-acid chain; its full sequence is Isoleucine--tRNA ligase (938 aa).

A 'HIGH' region motif is present at residues 58 to 68 (PYANGSIHIGH). K183 is subject to N6-acetyllysine. An L-isoleucyl-5'-AMP-binding site is contributed by E561. The 'KMSKS' region motif lies at 602–606 (KMSKS). K605 contacts ATP. The Zn(2+) site is built by C901, C904, C921, and C924.

This sequence belongs to the class-I aminoacyl-tRNA synthetase family. IleS type 1 subfamily. In terms of assembly, monomer. It depends on Zn(2+) as a cofactor.

The protein localises to the cytoplasm. The catalysed reaction is tRNA(Ile) + L-isoleucine + ATP = L-isoleucyl-tRNA(Ile) + AMP + diphosphate. Its function is as follows. Catalyzes the attachment of isoleucine to tRNA(Ile). As IleRS can inadvertently accommodate and process structurally similar amino acids such as valine, to avoid such errors it has two additional distinct tRNA(Ile)-dependent editing activities. One activity is designated as 'pretransfer' editing and involves the hydrolysis of activated Val-AMP. The other activity is designated 'posttransfer' editing and involves deacylation of mischarged Val-tRNA(Ile). The polypeptide is Isoleucine--tRNA ligase (Escherichia coli O6:K15:H31 (strain 536 / UPEC)).